Here is a 130-residue protein sequence, read N- to C-terminus: Fluoride-specific ion channel FluC (130 aa).

Transmembrane regions (helical) follow at residues 3-23, 39-59, 67-87, and 102-122; these read FVFL…YFVG, GTFS…HLAV, FGIF…SYGL, and ISYV…GWFL. G77 and T80 together coordinate Na(+).

This sequence belongs to the fluoride channel Fluc/FEX (TC 1.A.43) family.

The protein localises to the cell inner membrane. The enzyme catalyses fluoride(in) = fluoride(out). Its activity is regulated as follows. Na(+) is not transported, but it plays an essential structural role and its presence is essential for fluoride channel function. Its function is as follows. Fluoride-specific ion channel. Important for reducing fluoride concentration in the cell, thus reducing its toxicity. In Helicobacter pylori (strain P12), this protein is Fluoride-specific ion channel FluC.